Here is a 271-residue protein sequence, read N- to C-terminus: Phosphate import ATP-binding protein PstB (271 aa).

The ABC transporter domain occupies 25-266 (FDTKNLNLWY…PSDKRTEDYI (242 aa)). 57–64 (GPSGCGKS) is a binding site for ATP.

The protein belongs to the ABC transporter superfamily. Phosphate importer (TC 3.A.1.7) family. In terms of assembly, the complex is composed of two ATP-binding proteins (PstB), two transmembrane proteins (PstC and PstA) and a solute-binding protein (PstS).

It is found in the cell membrane. It catalyses the reaction phosphate(out) + ATP + H2O = ADP + 2 phosphate(in) + H(+). Part of the ABC transporter complex PstSACB involved in phosphate import. Responsible for energy coupling to the transport system. The chain is Phosphate import ATP-binding protein PstB from Bacillus anthracis.